Reading from the N-terminus, the 118-residue chain is Large ribosomal subunit protein bL20 (118 aa).

This sequence belongs to the bacterial ribosomal protein bL20 family.

Its function is as follows. Binds directly to 23S ribosomal RNA and is necessary for the in vitro assembly process of the 50S ribosomal subunit. It is not involved in the protein synthesizing functions of that subunit. This Alteromonas mediterranea (strain DSM 17117 / CIP 110805 / LMG 28347 / Deep ecotype) protein is Large ribosomal subunit protein bL20.